The primary structure comprises 176 residues: Ribosome rescue factor SmrB (176 aa).

One can recognise a Smr domain in the interval 93–168 (LDLHGYRQSE…GDAALLVLID (76 aa)).

It belongs to the SmrB family. In terms of assembly, associates with collided ribosomes, but not with correctly translating polysomes.

Functionally, acts as a ribosome collision sensor. Detects stalled/collided disomes (pairs of ribosomes where the leading ribosome is stalled and a second ribosome has collided with it) and endonucleolytically cleaves mRNA at the 5' boundary of the stalled ribosome. Stalled/collided disomes form a new interface (primarily via the 30S subunits) that binds SmrB. Cleaved mRNA becomes available for tmRNA ligation, leading to ribosomal subunit dissociation and rescue of stalled ribosomes. In Shewanella baltica (strain OS155 / ATCC BAA-1091), this protein is Ribosome rescue factor SmrB.